The primary structure comprises 213 residues: Probable nicotinate-nucleotide adenylyltransferase (213 aa).

This sequence belongs to the NadD family.

The catalysed reaction is nicotinate beta-D-ribonucleotide + ATP + H(+) = deamido-NAD(+) + diphosphate. The protein operates within cofactor biosynthesis; NAD(+) biosynthesis; deamido-NAD(+) from nicotinate D-ribonucleotide: step 1/1. Functionally, catalyzes the reversible adenylation of nicotinate mononucleotide (NaMN) to nicotinic acid adenine dinucleotide (NaAD). The protein is Probable nicotinate-nucleotide adenylyltransferase of Pectobacterium atrosepticum (strain SCRI 1043 / ATCC BAA-672) (Erwinia carotovora subsp. atroseptica).